The chain runs to 474 residues: MAIISEDDFRHTSNSTYRTASSSLRADQEALLEKLLDRPPPSLQRPEDRFNGTYIIFFSLGIGGLLPWNFFVTAQEYWIFKLSNCSSPAAGEEPKDSDILNYFESYLAVASTVPSVLCLALNFLLVNRVPIRVRVLASLTVMLAIFIVMTVLVKVDTSSWTHSFFTITITCMAILSGTSTIFNSSVFGMTGSFPMRNSQALISGGAMGGTLSAVASLVDLAVASDVTDSTLAFFLTADIFLALCIGLYLLLPRLDYARYYMKPVWPTVFSGEEQLPQDSPSPTSVAPGSSDPQTPPLGPILKKTTGLGFCIIYLFFITSLIFPAICTNIESLSKGSGSPWSTKFFVPLTTFLLYNFADLCGRQVTAWIQVPGPRSKALPGLALLRTCFVPLFVFCNYQPRGHLHTVLFQSDVYPVLFTSLLGLSNGYLSTLALIYGPKIVPRELAEATGVVMTFYMGLGLVLGSACSALLVHLI.

The Cytoplasmic segment spans residues 1-53; that stretch reads MAIISEDDFRHTSNSTYRTASSSLRADQEALLEKLLDRPPPSLQRPEDRFNGT. Ser21 and Ser23 each carry phosphoserine. A Dileucine internalization motif motif is present at residues 31–32; it reads LL. Residues 54-74 form a helical membrane-spanning segment; it reads YIIFFSLGIGGLLPWNFFVTA. The Extracellular portion of the chain corresponds to 75-105; sequence QEYWIFKLSNCSSPAAGEEPKDSDILNYFES. Asn84 carries N-linked (GlcNAc...) asparagine glycosylation. Residues 106–126 form a helical membrane-spanning segment; sequence YLAVASTVPSVLCLALNFLLV. At 127 to 134 the chain is on the cytoplasmic side; it reads NRVPIRVR. The helical transmembrane segment at 135–155 threads the bilayer; it reads VLASLTVMLAIFIVMTVLVKV. At 156–161 the chain is on the extracellular side; it reads DTSSWT. A helical membrane pass occupies residues 162 to 182; the sequence is HSFFTITITCMAILSGTSTIF. The Cytoplasmic segment spans residues 183 to 201; it reads NSSVFGMTGSFPMRNSQAL. The chain crosses the membrane as a helical span at residues 202 to 222; that stretch reads ISGGAMGGTLSAVASLVDLAV. Residues 223–230 lie on the Extracellular side of the membrane; that stretch reads ASDVTDST. Residues 231–251 traverse the membrane as a helical segment; that stretch reads LAFFLTADIFLALCIGLYLLL. At 252 to 305 the chain is on the cytoplasmic side; sequence PRLDYARYYMKPVWPTVFSGEEQLPQDSPSPTSVAPGSSDPQTPPLGPILKKTT. Positions 272–294 are disordered; it reads EEQLPQDSPSPTSVAPGSSDPQT. The span at 276 to 292 shows a compositional bias: polar residues; sequence PQDSPSPTSVAPGSSDP. Residues 306-326 form a helical membrane-spanning segment; sequence GLGFCIIYLFFITSLIFPAIC. The Extracellular segment spans residues 327 to 339; the sequence is TNIESLSKGSGSP. The helical transmembrane segment at 340–357 threads the bilayer; that stretch reads WSTKFFVPLTTFLLYNFA. Over 358 to 376 the chain is Cytoplasmic; that stretch reads DLCGRQVTAWIQVPGPRSK. A helical transmembrane segment spans residues 377-397; that stretch reads ALPGLALLRTCFVPLFVFCNY. Residues 398–414 are Extracellular-facing; it reads QPRGHLHTVLFQSDVYP. A helical transmembrane segment spans residues 415–435; sequence VLFTSLLGLSNGYLSTLALIY. The Cytoplasmic portion of the chain corresponds to 436–453; sequence GPKIVPRELAEATGVVMT. Residues 454 to 474 form a helical membrane-spanning segment; sequence FYMGLGLVLGSACSALLVHLI.

The protein belongs to the SLC29A/ENT transporter (TC 2.A.57) family.

It localises to the lysosome membrane. The protein resides in the late endosome membrane. The protein localises to the mitochondrion membrane. Its subcellular location is the cell membrane. The catalysed reaction is adenosine(in) = adenosine(out). The enzyme catalyses guanosine(in) = guanosine(out). It carries out the reaction inosine(in) = inosine(out). It catalyses the reaction uridine(out) = uridine(in). The catalysed reaction is cytidine(in) = cytidine(out). The enzyme catalyses thymidine(in) = thymidine(out). It carries out the reaction 2'-deoxyadenosine(in) = 2'-deoxyadenosine(out). It catalyses the reaction 2'-deoxycytidine(in) = 2'-deoxycytidine(out). The catalysed reaction is guanine(out) = guanine(in). The enzyme catalyses uracil(in) = uracil(out). It carries out the reaction (R)-noradrenaline(out) = (R)-noradrenaline(in). It catalyses the reaction dopamine(out) = dopamine(in). The catalysed reaction is serotonin(out) = serotonin(in). The enzyme catalyses tyramine(in) = tyramine(out). It carries out the reaction ATP(in) = ATP(out). Uniporter that mediates the facilitative transport of nucleoside across lysosomal and mitochondrial membranes. Functions as a non-electrogenic Na(+)-independent transporter. Substrate transport is pH-dependent and enhanced under acidic condition, probably reflecting the location of the transporter in acidic intracellular compartments. Proton is not a cotransporting ion but most likely change the ionization state of the transporter which dictates transport-permissible/impermissible conformation for nucleoside translocation. May direct the nucleoside transport from lysosomes to cytosol or cytosol to mitochondria to facilitate the fundamental function of salvage synthesis of nucleic acids. Involved in the transport of nucleosides (adenosine, guanosine, uridine, thymidine, cytidine and inosine) and deoxynucleosides (deoxyadenosine, deoxycytidine). Also mediates transport of purine nucleobases (adenine, guanine) and pyrimidine nucleobases (uracil). Also able to transport monoamine neurotransmitters dopamine, serotonin, noradrenaline and tyramine. Capable of transporting ATP. Mediates nucleoside export from lysosomes in macrophages, which regulates macrophage functions and numbers. The sequence is that of Equilibrative nucleoside transporter 3 (SLC29A3) from Bos taurus (Bovine).